We begin with the raw amino-acid sequence, 290 residues long: MRFDEAYSGKVFIKSHPSFEESEVVIYGMPMDWTVSYRPGSRFGPARIREVSIGLEEYSPYLDRELEEVKYFDAGDIPLPFGNAQRSLDMIEEYVSKLLDAGKFPLGLGGEHLVSWPIFKAMAKKYPDLAIIHMDAHTDLRESYEGEPLSHSTPIRKVCDLIGPENVYSFGIRSGMKEEFEWAKEVGMNLYKFDVLEPLKEVLPKLEGRPVYVTIDIDVLDPAHAPGTGTLEAGGITSKELLDSIVAIANSNINVVGADLVEVAPVYDHSDQTPVAASKFVREMLLGWVK.

Residues His-112, Asp-135, His-137, Asp-139, Asp-216, and Asp-218 each coordinate Mn(2+).

It belongs to the arginase family. Agmatinase subfamily. The cofactor is Mn(2+).

It carries out the reaction agmatine + H2O = urea + putrescine. It functions in the pathway amine and polyamine biosynthesis; putrescine biosynthesis via agmatine pathway; putrescine from agmatine: step 1/1. Catalyzes the formation of putrescine from agmatine. In Bacillus anthracis, this protein is Agmatinase (speB).